The primary structure comprises 85 residues: DNA-directed RNA polymerase subunit omega (85 aa).

This sequence belongs to the RNA polymerase subunit omega family. In terms of assembly, the RNAP catalytic core consists of 2 alpha, 1 beta, 1 beta' and 1 omega subunit. When a sigma factor is associated with the core the holoenzyme is formed, which can initiate transcription.

The enzyme catalyses RNA(n) + a ribonucleoside 5'-triphosphate = RNA(n+1) + diphosphate. In terms of biological role, promotes RNA polymerase assembly. Latches the N- and C-terminal regions of the beta' subunit thereby facilitating its interaction with the beta and alpha subunits. This chain is DNA-directed RNA polymerase subunit omega, found in Latilactobacillus sakei subsp. sakei (strain 23K) (Lactobacillus sakei subsp. sakei).